The chain runs to 414 residues: 2,3-diketo-5-methylthiopentyl-1-phosphate enolase (414 aa).

Catalysis depends on Lys99, which acts as the Proton acceptor. Substrate is bound by residues Lys148, 174-177, His265, Gly338, and 360-361; these read KDDE and GG. Mg(2+) contacts are provided by Lys174, Asp176, and Glu177. Lys174 carries the post-translational modification N6-carboxylysine.

Belongs to the RuBisCO large chain family. Type IV subfamily. Homodimer. Mg(2+) is required as a cofactor.

It carries out the reaction 5-methylsulfanyl-2,3-dioxopentyl phosphate = 2-hydroxy-5-methylsulfanyl-3-oxopent-1-enyl phosphate. The protein operates within amino-acid biosynthesis; L-methionine biosynthesis via salvage pathway; L-methionine from S-methyl-5-thio-alpha-D-ribose 1-phosphate: step 3/6. Functionally, catalyzes the enolization of 2,3-diketo-5-methylthiopentyl-1-phosphate (DK-MTP-1-P) into 2-hydroxy-3-keto-5-methylthiopentenyl-1-phosphate (HK-MTPenyl-1-P). The polypeptide is 2,3-diketo-5-methylthiopentyl-1-phosphate enolase (Bacillus cereus (strain B4264)).